We begin with the raw amino-acid sequence, 245 residues long: Transmembrane protein 69 (245 aa).

The next 5 helical transmembrane spans lie at 97–117 (ALYI…LMVI), 122–142 (IPVL…FLGG), 159–179 (YINL…ILFS), 185–205 (AIVT…FLLP), and 216–236 (IVST…ENIY).

The protein resides in the membrane. The sequence is that of Transmembrane protein 69 (Tmem69) from Mus musculus (Mouse).